A 331-amino-acid chain; its full sequence is 6-phosphogluconolactonase (331 aa).

Lysine 287 bears the N6-acetyllysine mark.

This sequence belongs to the cycloisomerase 2 family.

It carries out the reaction 6-phospho-D-glucono-1,5-lactone + H2O = 6-phospho-D-gluconate + H(+). It participates in carbohydrate degradation; pentose phosphate pathway; D-ribulose 5-phosphate from D-glucose 6-phosphate (oxidative stage): step 2/3. Functionally, catalyzes the hydrolysis of 6-phosphogluconolactone to 6-phosphogluconate. The sequence is that of 6-phosphogluconolactonase from Escherichia coli O157:H7.